The sequence spans 144 residues: Granulocyte-macrophage colony-stimulating factor (144 aa).

Residues Met1–Ser17 form the signal peptide. Ser22 is a glycosylation site (O-linked (GalNAc...) serine). O-linked (GalNAc...) threonine glycosylation is present at Thr27. N-linked (GlcNAc...) asparagine glycosylation occurs at Asn44. 2 disulfides stabilise this stretch: Cys71-Cys113 and Cys105-Cys138.

It belongs to the GM-CSF family. In terms of assembly, monomer. The signaling GM-CSF receptor complex is a dodecamer of two head-to-head hexamers of two alpha, two beta, and two ligand subunits.

The protein localises to the secreted. Functionally, cytokine that stimulates the growth and differentiation of hematopoietic precursor cells from various lineages, including granulocytes, macrophages, eosinophils and erythrocytes. This Canis lupus familiaris (Dog) protein is Granulocyte-macrophage colony-stimulating factor (CSF2).